The primary structure comprises 349 residues: Phenylalanine--tRNA ligase alpha subunit (349 aa).

Glu259 lines the Mg(2+) pocket.

This sequence belongs to the class-II aminoacyl-tRNA synthetase family. Phe-tRNA synthetase alpha subunit type 1 subfamily. Tetramer of two alpha and two beta subunits. The cofactor is Mg(2+).

It localises to the cytoplasm. The catalysed reaction is tRNA(Phe) + L-phenylalanine + ATP = L-phenylalanyl-tRNA(Phe) + AMP + diphosphate + H(+). The sequence is that of Phenylalanine--tRNA ligase alpha subunit from Lactobacillus johnsonii (strain CNCM I-12250 / La1 / NCC 533).